The chain runs to 343 residues: Anthranilate phosphoribosyltransferase (343 aa).

Residues Gly77, 80–81, Thr85, 87–90, 105–113, and Ser117 contribute to the 5-phospho-alpha-D-ribose 1-diphosphate site; these read GD, NVST, and KHGNRSSSG. Residue Gly77 participates in anthranilate binding. A Mg(2+)-binding site is contributed by Ser89. Position 108 (Asn108) interacts with anthranilate. Arg163 contacts anthranilate. The Mg(2+) site is built by Asp222 and Glu223.

The protein belongs to the anthranilate phosphoribosyltransferase family. In terms of assembly, homodimer. The cofactor is Mg(2+).

The catalysed reaction is N-(5-phospho-beta-D-ribosyl)anthranilate + diphosphate = 5-phospho-alpha-D-ribose 1-diphosphate + anthranilate. It participates in amino-acid biosynthesis; L-tryptophan biosynthesis; L-tryptophan from chorismate: step 2/5. In terms of biological role, catalyzes the transfer of the phosphoribosyl group of 5-phosphorylribose-1-pyrophosphate (PRPP) to anthranilate to yield N-(5'-phosphoribosyl)-anthranilate (PRA). In Cenarchaeum symbiosum (strain A), this protein is Anthranilate phosphoribosyltransferase.